The chain runs to 143 residues: Transthyretin-like protein 33 (143 aa).

The N-terminal stretch at 1 to 20 (MSRLACISSLFILCAIGSEA) is a signal peptide.

This sequence belongs to the nematode transthyretin-like family. Expressed in head cells next to and anterior of the first pharyngeal bulb, the pharynx, and the hypodermis.

The protein resides in the secreted. Protects dopaminergic neurons from degeneration caused by oxidative stress. The chain is Transthyretin-like protein 33 from Caenorhabditis elegans.